We begin with the raw amino-acid sequence, 230 residues long: Ribose-5-phosphate isomerase A (230 aa).

Residues 29-32 (TGST), 85-88 (DGAD), and 98-101 (KGGG) each bind substrate. Glu-107 acts as the Proton acceptor in catalysis. Residue Lys-125 participates in substrate binding.

It belongs to the ribose 5-phosphate isomerase family. As to quaternary structure, homodimer.

It carries out the reaction aldehydo-D-ribose 5-phosphate = D-ribulose 5-phosphate. It participates in carbohydrate degradation; pentose phosphate pathway; D-ribose 5-phosphate from D-ribulose 5-phosphate (non-oxidative stage): step 1/1. In terms of biological role, catalyzes the reversible conversion of ribose-5-phosphate to ribulose 5-phosphate. This chain is Ribose-5-phosphate isomerase A, found in Staphylococcus epidermidis (strain ATCC 35984 / DSM 28319 / BCRC 17069 / CCUG 31568 / BM 3577 / RP62A).